The chain runs to 316 residues: Methionyl-tRNA formyltransferase (316 aa).

(6S)-5,6,7,8-tetrahydrofolate is bound at residue 114 to 117 (SLLP).

The protein belongs to the Fmt family.

It catalyses the reaction L-methionyl-tRNA(fMet) + (6R)-10-formyltetrahydrofolate = N-formyl-L-methionyl-tRNA(fMet) + (6S)-5,6,7,8-tetrahydrofolate + H(+). In terms of biological role, attaches a formyl group to the free amino group of methionyl-tRNA(fMet). The formyl group appears to play a dual role in the initiator identity of N-formylmethionyl-tRNA by promoting its recognition by IF2 and preventing the misappropriation of this tRNA by the elongation apparatus. The polypeptide is Methionyl-tRNA formyltransferase (Aromatoleum aromaticum (strain DSM 19018 / LMG 30748 / EbN1) (Azoarcus sp. (strain EbN1))).